We begin with the raw amino-acid sequence, 120 residues long: NAD(P)H-quinone oxidoreductase subunit 3, chloroplastic (120 aa).

The next 3 helical transmembrane spans lie at 10-30 (FWFF…TSKL), 64-84 (MFAL…PWAM), and 89-109 (LGVY…IGLV).

The protein belongs to the complex I subunit 3 family. In terms of assembly, NDH is composed of at least 16 different subunits, 5 of which are encoded in the nucleus.

The protein resides in the plastid. It localises to the chloroplast thylakoid membrane. It catalyses the reaction a plastoquinone + NADH + (n+1) H(+)(in) = a plastoquinol + NAD(+) + n H(+)(out). The enzyme catalyses a plastoquinone + NADPH + (n+1) H(+)(in) = a plastoquinol + NADP(+) + n H(+)(out). Functionally, NDH shuttles electrons from NAD(P)H:plastoquinone, via FMN and iron-sulfur (Fe-S) centers, to quinones in the photosynthetic chain and possibly in a chloroplast respiratory chain. The immediate electron acceptor for the enzyme in this species is believed to be plastoquinone. Couples the redox reaction to proton translocation, and thus conserves the redox energy in a proton gradient. This Chaetosphaeridium globosum (Charophycean green alga) protein is NAD(P)H-quinone oxidoreductase subunit 3, chloroplastic.